We begin with the raw amino-acid sequence, 181 residues long: Probable cobalt-precorrin-6B C(15)-methyltransferase (decarboxylating) (181 aa).

S-adenosyl-L-methionine contacts are provided by residues Thr-16, Gly-40–Gly-44, Asp-61, and Ala-89.

Belongs to the methyltransferase superfamily. Archaeal-type CbiT family.

It catalyses the reaction Co-precorrin-6B + S-adenosyl-L-methionine = Co-precorrin-7 + S-adenosyl-L-homocysteine + CO2. It functions in the pathway cofactor biosynthesis; adenosylcobalamin biosynthesis; cob(II)yrinate a,c-diamide from sirohydrochlorin (anaerobic route): step 8/10. In terms of biological role, catalyzes the methylation of C-15 in cobalt-precorrin-6B followed by the decarboxylation of C-12 to form cobalt-precorrin-7. The sequence is that of Probable cobalt-precorrin-6B C(15)-methyltransferase (decarboxylating) from Methanococcus maripaludis (strain C6 / ATCC BAA-1332).